Consider the following 167-residue polypeptide: Neutrophilic granule protein (167 aa).

Positions 1–21 (MAGLWKTFVLVVALAVVSCEA) are cleaved as a signal peptide. The segment at 122–141 (EDTQETSFNDKQDVSEKEKF) is disordered.

The protein belongs to the cathelicidin family. Monomer. Homodimer; disulfide-linked. In terms of tissue distribution, expressed in myeloid bone marrow cells. Expressed in neutrophilic precursors (at protein level). Expressed in myeloid bone marrow cells.

The protein localises to the secreted. The protein resides in the cytoplasmic granule. Functionally, acts as an inhibitor of cathepsin B (CTSB) activity. Plays a role as a negative regulator of tumor vascular development, cell invasion and metastasis. In Mus musculus (Mouse), this protein is Neutrophilic granule protein.